A 254-amino-acid chain; its full sequence is Triosephosphate isomerase (254 aa).

12 to 14 contributes to the substrate binding site; it reads NWK. H99 acts as the Electrophile in catalysis. The active-site Proton acceptor is E169. Substrate-binding positions include G175, S214, and 235 to 236; that span reads GG.

This sequence belongs to the triosephosphate isomerase family. In terms of assembly, homodimer.

The protein localises to the cytoplasm. It catalyses the reaction D-glyceraldehyde 3-phosphate = dihydroxyacetone phosphate. It participates in carbohydrate biosynthesis; gluconeogenesis. Its pathway is carbohydrate degradation; glycolysis; D-glyceraldehyde 3-phosphate from glycerone phosphate: step 1/1. Involved in the gluconeogenesis. Catalyzes stereospecifically the conversion of dihydroxyacetone phosphate (DHAP) to D-glyceraldehyde-3-phosphate (G3P). The polypeptide is Triosephosphate isomerase (Brucella abortus biovar 1 (strain 9-941)).